Consider the following 152-residue polypeptide: MKAVIQRVLSGSVTSEGEVVGSIQKGLAVLVGIARDDTADDTEYILRKILGVRVWSNEDGSKMWCRNVKEIDGEVLLISQFTLMHVMKGNKPDFHNAMPPEDALKVFNALRDKLRCEYAPHKIATGNFQHYMNIHLSNDGPVTLILDSKKRS.

The Gly-cisPro motif, important for rejection of L-amino acids motif lies at 140–141 (GP).

It belongs to the DTD family. Homodimer.

It localises to the cytoplasm. The enzyme catalyses glycyl-tRNA(Ala) + H2O = tRNA(Ala) + glycine + H(+). It catalyses the reaction a D-aminoacyl-tRNA + H2O = a tRNA + a D-alpha-amino acid + H(+). Functionally, an aminoacyl-tRNA editing enzyme that deacylates mischarged D-aminoacyl-tRNAs. Hydrolyzes correctly charged, achiral, glycyl-tRNA(Gly). Deacylates mischarged D.melanogaster and E.coli glycyl-tRNA(Ala), protecting cells against glycine mischarging by AlaRS. Acts via tRNA-based rather than protein-based catalysis; rejects L-amino acids rather than detecting D-amino acids in the active site. By recycling D-aminoacyl-tRNA to D-amino acids and free tRNA molecules, this enzyme counteracts the toxicity associated with the formation of D-aminoacyl-tRNA entities in vivo and helps enforce protein L-homochirality. This chain is D-aminoacyl-tRNA deacylase 1 (dtd1), found in Leishmania major.